The following is a 524-amino-acid chain: MSSFSSEVQRRRTFAIISHPDAGKTTLTEKLLWFGGAIQVAGEVRGRKAARHATSDWMELEKQRGISVTSSVMQFPYREHMINLLDTPGHDDFSEDTYRTLTAVDSAVMVIDSVNGVEAQTIKLLNVCRMRDTPILTFINKLDRESRAPIELLDEIESTLGMQCAPMTWPIGMGKSFRGVYHLYNDTISFFDPHAEKGTAEIIQGLDNPRLDELIGAQADDLRVDVELVRGASNAFDKQAYLDGKQTPVFFGSAINNFGVQSLLDAVVELSPPPLPRNTASRVVEPTEEKFSGFVFKIQANMDPKHRDRIAFLRICSGRFERGMKIKQVATGKTLSVNNAITFMAQDRTTMDEAYSGDIIGIPNHGTVKLGDTFTEGENLKFIGIPSFAPEYFRRARIKNPMKMKQLQIGLKQLAEEGASQLFRPLLSNDLILGAIGLLQFDVVAHRLEHEYGVDVAFENYDCATARWLRGSDADLKAIADKYGFNVALDGNEEYVYLAPNRVNLQMAQERYPDIEFLETREIF.

One can recognise a tr-type G domain in the interval 9–275 (QRRRTFAIIS…AVVELSPPPL (267 aa)). Residues 18–25 (SHPDAGKT), 86–90 (DTPGH), and 140–143 (NKLD) contribute to the GTP site.

The protein belongs to the TRAFAC class translation factor GTPase superfamily. Classic translation factor GTPase family. PrfC subfamily.

It is found in the cytoplasm. In terms of biological role, increases the formation of ribosomal termination complexes and stimulates activities of RF-1 and RF-2. It binds guanine nucleotides and has strong preference for UGA stop codons. It may interact directly with the ribosome. The stimulation of RF-1 and RF-2 is significantly reduced by GTP and GDP, but not by GMP. The protein is Peptide chain release factor 3 of Methylobacillus flagellatus (strain ATCC 51484 / DSM 6875 / VKM B-1610 / KT).